Reading from the N-terminus, the 276-residue chain is Large ribosomal subunit protein uL2 (276 aa).

2 disordered regions span residues 34–55 (LQPLKNNAGRNNNGRITVRHQG) and 221–276 (RGSV…RRTK). Residues 37–48 (LKNNAGRNNNGR) show a composition bias toward polar residues.

The protein belongs to the universal ribosomal protein uL2 family. In terms of assembly, part of the 50S ribosomal subunit. Forms a bridge to the 30S subunit in the 70S ribosome.

One of the primary rRNA binding proteins. Required for association of the 30S and 50S subunits to form the 70S ribosome, for tRNA binding and peptide bond formation. It has been suggested to have peptidyltransferase activity; this is somewhat controversial. Makes several contacts with the 16S rRNA in the 70S ribosome. The chain is Large ribosomal subunit protein uL2 from Enterococcus faecalis (strain ATCC 700802 / V583).